The chain runs to 588 residues: Sperm-associated microtubule inner protein 4 (588 aa).

Residue threonine 219 is modified to Phosphothreonine. A phosphoserine mark is found at serine 406, serine 421, and serine 427. Tyrosine 441 carries the post-translational modification Phosphotyrosine. Residues serine 457, serine 484, and serine 516 each carry the phosphoserine modification.

Predominantly expressed in the testes.

The protein localises to the cytoplasm. The protein resides in the cytoskeleton. It localises to the microtubule organizing center. Its subcellular location is the centrosome. It is found in the flagellum axoneme. Functionally, microtubule inner protein (MIP) part of the dynein-decorated doublet microtubules (DMTs) in flagellum axoneme. May serve to reinforce and thus stabilize the microtubule structure in the sperm flagella. This is Sperm-associated microtubule inner protein 4 (Spmip4) from Mus musculus (Mouse).